Consider the following 270-residue polypeptide: Acyl-[acyl-carrier-protein]--UDP-N-acetylglucosamine O-acyltransferase (270 aa).

The protein belongs to the transferase hexapeptide repeat family. LpxA subfamily. As to quaternary structure, homotrimer.

The protein resides in the cytoplasm. The catalysed reaction is a (3R)-hydroxyacyl-[ACP] + UDP-N-acetyl-alpha-D-glucosamine = a UDP-3-O-[(3R)-3-hydroxyacyl]-N-acetyl-alpha-D-glucosamine + holo-[ACP]. The protein operates within glycolipid biosynthesis; lipid IV(A) biosynthesis; lipid IV(A) from (3R)-3-hydroxytetradecanoyl-[acyl-carrier-protein] and UDP-N-acetyl-alpha-D-glucosamine: step 1/6. In terms of biological role, involved in the biosynthesis of lipid A, a phosphorylated glycolipid that anchors the lipopolysaccharide to the outer membrane of the cell. This Helicobacter acinonychis (strain Sheeba) protein is Acyl-[acyl-carrier-protein]--UDP-N-acetylglucosamine O-acyltransferase.